The following is a 457-amino-acid chain: COBRA-like protein 3 (457 aa).

A signal peptide spans 1 to 35; sequence MAVGGAGSSRSVAPCCCCAVLLAAALLFSAPATTE. Residues N45, N170, N178, N217, N242, N258, N326, N341, and N361 are each glycosylated (N-linked (GlcNAc...) asparagine). A lipid anchor (GPI-anchor amidated asparagine) is attached at N430. The propeptide at 431–457 is removed in mature form; that stretch reads ASPLTKQPLTLSVLVFSIVLATLLAYA. The chain crosses the membrane as a helical span at residues 437–457; that stretch reads QPLTLSVLVFSIVLATLLAYA.

This sequence belongs to the COBRA family.

It is found in the cell membrane. Functionally, involved in determining the orientation of cell expansion, probably by playing an important role in cellulose deposition. May act by recruiting cellulose synthesizing complexes to discrete positions on the cell surface. The sequence is that of COBRA-like protein 3 (BC1L4) from Oryza sativa subsp. japonica (Rice).